The sequence spans 463 residues: ATP synthase subunit beta (463 aa).

Residue 152 to 159 coordinates ATP; sequence GGAGVGKT.

Belongs to the ATPase alpha/beta chains family. In terms of assembly, F-type ATPases have 2 components, CF(1) - the catalytic core - and CF(0) - the membrane proton channel. CF(1) has five subunits: alpha(3), beta(3), gamma(1), delta(1), epsilon(1). CF(0) has three main subunits: a(1), b(2) and c(9-12). The alpha and beta chains form an alternating ring which encloses part of the gamma chain. CF(1) is attached to CF(0) by a central stalk formed by the gamma and epsilon chains, while a peripheral stalk is formed by the delta and b chains.

It is found in the cell membrane. It catalyses the reaction ATP + H2O + 4 H(+)(in) = ADP + phosphate + 5 H(+)(out). In terms of biological role, produces ATP from ADP in the presence of a proton gradient across the membrane. The catalytic sites are hosted primarily by the beta subunits. This Clostridium botulinum (strain Eklund 17B / Type B) protein is ATP synthase subunit beta.